Consider the following 423-residue polypeptide: TPR repeat-containing protein YpiA (423 aa).

9 TPR repeats span residues 33–66, 67–100, 135–168, 171–204, 238–271, 272–305, 306–339, 340–373, and 374–407; these read DEDK…YPNE, TELT…DPSY, PVID…QSEI, VNVH…NPDP, TSLY…DEYN, KELF…DPGF, VEAL…GEED, PKYN…YRED, and RDFL…DGAN.

Interacts with the RNA polymerase core.

This chain is TPR repeat-containing protein YpiA (ypiA), found in Bacillus subtilis (strain 168).